We begin with the raw amino-acid sequence, 149 residues long: Sec-independent protein translocase protein TatB (149 aa).

Residues 1-22 (MFDGIGFMELLLIGVLGLIVLG) form a helical membrane-spanning segment. The segment covering 86–113 (LKQAAQSVNRPYQVQDTPSAQDNQIHNP) has biased composition (polar residues). The disordered stretch occupies residues 86 to 149 (LKQAAQSVNR…DPRSNTKANG (64 aa)). The span at 114-135 (ASQTVSTEASSTSASSAPKSES) shows a compositional bias: low complexity.

This sequence belongs to the TatB family. The Tat system comprises two distinct complexes: a TatABC complex, containing multiple copies of TatA, TatB and TatC subunits, and a separate TatA complex, containing only TatA subunits. Substrates initially bind to the TatABC complex, which probably triggers association of the separate TatA complex to form the active translocon.

The protein resides in the cell inner membrane. Its function is as follows. Part of the twin-arginine translocation (Tat) system that transports large folded proteins containing a characteristic twin-arginine motif in their signal peptide across membranes. Together with TatC, TatB is part of a receptor directly interacting with Tat signal peptides. TatB may form an oligomeric binding site that transiently accommodates folded Tat precursor proteins before their translocation. The protein is Sec-independent protein translocase protein TatB of Shewanella oneidensis (strain ATCC 700550 / JCM 31522 / CIP 106686 / LMG 19005 / NCIMB 14063 / MR-1).